Here is a 303-residue protein sequence, read N- to C-terminus: Zinc transporter ZIP9 (303 aa).

A helical membrane pass occupies residues 7–27; the sequence is ISLLSLAMLVGCYVSGIIPLA. Asn-29 is a glycosylation site (N-linked (GlcNAc...) asparagine). The next 5 helical transmembrane spans lie at 35-55, 102-122, 142-162, 172-192, and 206-226; these read LKLVTVLGAGLLCGTALAVIV, AYIGVSLVLGFVFMLLVDQIG, ITTTLGLVVHAAADGVALGAA, LIVFVAIMLHKAPAAFGLVSF, and HLLVFALAAPVLSMLTYLGLS. A glycan (N-linked (GlcNAc...) asparagine) is linked at Asn-237. 2 consecutive transmembrane segments (helical) span residues 240–260 and 282–302; these read GVAMLFSAGTFLYVATVHVLP and LEVCALVLGCLIPLVLSIGHQ.

Belongs to the ZIP transporter (TC 2.A.5) family.

It is found in the golgi apparatus. It localises to the trans-Golgi network membrane. The protein resides in the cell membrane. The protein localises to the cytoplasm. Its subcellular location is the perinuclear region. It is found in the mitochondrion. It localises to the nucleus. It carries out the reaction Zn(2+)(in) = Zn(2+)(out). Functionally, transports zinc ions across cell and organelle membranes into the cytoplasm and regulates intracellular zinc homeostasis. Participates in the zinc ions efflux out of the secretory compartments. Also functions as a membrane androgen receptor that mediates, through a G protein, the non-classical androgen signaling pathway, characterized by the activation of MAPK3/MAPK1 (Erk1/2) and transcription factors CREB1 or ATF1. Moreover, has dual functions as a membrane-bound androgen receptor and as an androgen-dependent zinc transporter both of which are mediated through an inhibitory G protein (Gi) that mediates both MAP kinase and zinc signaling leading to the androgen-dependent apoptotic process. The polypeptide is Zinc transporter ZIP9 (Xenopus tropicalis (Western clawed frog)).